The following is a 151-amino-acid chain: Deoxyuridine 5'-triphosphate nucleotidohydrolase (151 aa).

Substrate-binding positions include 70–72 (RSG), asparagine 83, 87–89 (LID), and methionine 97.

It belongs to the dUTPase family. In terms of assembly, homotrimer. Mg(2+) is required as a cofactor.

It catalyses the reaction dUTP + H2O = dUMP + diphosphate + H(+). Its pathway is pyrimidine metabolism; dUMP biosynthesis; dUMP from dCTP (dUTP route): step 2/2. This enzyme is involved in nucleotide metabolism: it produces dUMP, the immediate precursor of thymidine nucleotides and it decreases the intracellular concentration of dUTP so that uracil cannot be incorporated into DNA. The sequence is that of Deoxyuridine 5'-triphosphate nucleotidohydrolase from Escherichia coli O7:K1 (strain IAI39 / ExPEC).